Consider the following 174-residue polypeptide: Adenine phosphoribosyltransferase (174 aa).

Belongs to the purine/pyrimidine phosphoribosyltransferase family. Homodimer.

The protein localises to the cytoplasm. It catalyses the reaction AMP + diphosphate = 5-phospho-alpha-D-ribose 1-diphosphate + adenine. It participates in purine metabolism; AMP biosynthesis via salvage pathway; AMP from adenine: step 1/1. Functionally, catalyzes a salvage reaction resulting in the formation of AMP, that is energically less costly than de novo synthesis. This chain is Adenine phosphoribosyltransferase, found in Photobacterium profundum (strain SS9).